Here is an 88-residue protein sequence, read N- to C-terminus: Elongation factor 1-beta (88 aa).

It belongs to the EF-1-beta/EF-1-delta family.

Functionally, promotes the exchange of GDP for GTP in EF-1-alpha/GDP, thus allowing the regeneration of EF-1-alpha/GTP that could then be used to form the ternary complex EF-1-alpha/GTP/AAtRNA. This chain is Elongation factor 1-beta (ef1b), found in Archaeoglobus fulgidus (strain ATCC 49558 / DSM 4304 / JCM 9628 / NBRC 100126 / VC-16).